Reading from the N-terminus, the 624-residue chain is Phosphoenolpyruvate carboxykinase (ATP) 1 (624 aa).

Positions 1–22 are disordered; the sequence is MASPNGGVTTYDYDDSDSAAPV. 322-329 contributes to the ATP binding site; the sequence is GLSGTGKT.

It belongs to the phosphoenolpyruvate carboxykinase (ATP) family. Homohexamer. In terms of tissue distribution, green leaves but not in roots or etiolated shoots.

The protein resides in the cytoplasm. The enzyme catalyses oxaloacetate + ATP = phosphoenolpyruvate + ADP + CO2. The protein operates within carbohydrate biosynthesis; gluconeogenesis. This Urochloa panicoides (Panic liverseed grass) protein is Phosphoenolpyruvate carboxykinase (ATP) 1 (PCK1).